Consider the following 465-residue polypeptide: Ribulose bisphosphate carboxylase large chain (465 aa).

N6,N6,N6-trimethyllysine is present on Lys4. Residues Asn113 and Thr163 each contribute to the substrate site. The active-site Proton acceptor is Lys165. Lys167 serves as a coordination point for substrate. 3 residues coordinate Mg(2+): Lys191, Asp193, and Glu194. Lys191 is subject to N6-carboxylysine. The Proton acceptor role is filled by His284. Residues Arg285, His317, and Ser369 each coordinate substrate.

It belongs to the RuBisCO large chain family. Type I subfamily. As to quaternary structure, heterohexadecamer of 8 large chains and 8 small chains; disulfide-linked. The disulfide link is formed within the large subunit homodimers. Requires Mg(2+) as cofactor. The disulfide bond which can form in the large chain dimeric partners within the hexadecamer appears to be associated with oxidative stress and protein turnover.

It localises to the plastid. Its subcellular location is the chloroplast. It carries out the reaction 2 (2R)-3-phosphoglycerate + 2 H(+) = D-ribulose 1,5-bisphosphate + CO2 + H2O. The catalysed reaction is D-ribulose 1,5-bisphosphate + O2 = 2-phosphoglycolate + (2R)-3-phosphoglycerate + 2 H(+). Its function is as follows. RuBisCO catalyzes two reactions: the carboxylation of D-ribulose 1,5-bisphosphate, the primary event in carbon dioxide fixation, as well as the oxidative fragmentation of the pentose substrate in the photorespiration process. Both reactions occur simultaneously and in competition at the same active site. This Ulmus alata (Winged elm) protein is Ribulose bisphosphate carboxylase large chain.